Here is a 303-residue protein sequence, read N- to C-terminus: Sulfate adenylyltransferase subunit 2 (303 aa).

The protein belongs to the PAPS reductase family. CysD subfamily. As to quaternary structure, heterodimer composed of CysD, the smaller subunit, and CysN.

It catalyses the reaction sulfate + ATP + H(+) = adenosine 5'-phosphosulfate + diphosphate. The protein operates within sulfur metabolism; hydrogen sulfide biosynthesis; sulfite from sulfate: step 1/3. In terms of biological role, with CysN forms the ATP sulfurylase (ATPS) that catalyzes the adenylation of sulfate producing adenosine 5'-phosphosulfate (APS) and diphosphate, the first enzymatic step in sulfur assimilation pathway. APS synthesis involves the formation of a high-energy phosphoric-sulfuric acid anhydride bond driven by GTP hydrolysis by CysN coupled to ATP hydrolysis by CysD. This is Sulfate adenylyltransferase subunit 2 from Aliarcobacter butzleri (strain RM4018) (Arcobacter butzleri).